A 557-amino-acid chain; its full sequence is Dihydroxy-acid dehydratase (557 aa).

Residue Asp-78 participates in Mg(2+) binding. Residue Cys-119 participates in [2Fe-2S] cluster binding. Residues Asp-120 and Lys-121 each coordinate Mg(2+). Lys-121 is subject to N6-carboxylysine. A [2Fe-2S] cluster-binding site is contributed by Cys-192. Glu-442 lines the Mg(2+) pocket. Residue Ser-468 is the Proton acceptor of the active site.

This sequence belongs to the IlvD/Edd family. As to quaternary structure, homodimer. [2Fe-2S] cluster is required as a cofactor. The cofactor is Mg(2+).

It catalyses the reaction (2R)-2,3-dihydroxy-3-methylbutanoate = 3-methyl-2-oxobutanoate + H2O. The catalysed reaction is (2R,3R)-2,3-dihydroxy-3-methylpentanoate = (S)-3-methyl-2-oxopentanoate + H2O. It functions in the pathway amino-acid biosynthesis; L-isoleucine biosynthesis; L-isoleucine from 2-oxobutanoate: step 3/4. It participates in amino-acid biosynthesis; L-valine biosynthesis; L-valine from pyruvate: step 3/4. In terms of biological role, functions in the biosynthesis of branched-chain amino acids. Catalyzes the dehydration of (2R,3R)-2,3-dihydroxy-3-methylpentanoate (2,3-dihydroxy-3-methylvalerate) into 2-oxo-3-methylpentanoate (2-oxo-3-methylvalerate) and of (2R)-2,3-dihydroxy-3-methylbutanoate (2,3-dihydroxyisovalerate) into 2-oxo-3-methylbutanoate (2-oxoisovalerate), the penultimate precursor to L-isoleucine and L-valine, respectively. The protein is Dihydroxy-acid dehydratase of Bacillus cereus (strain ZK / E33L).